A 176-amino-acid polypeptide reads, in one-letter code: CDP-archaeol synthase (176 aa).

4 helical membrane-spanning segments follow: residues 41–61, 73–93, 114–134, and 138–158; these read GLIGGIVVGIIFGLMQIFLYN, IITVCALATGALLGDMVKSYF, VVGSLVLMTLALLVTGNLNWF, and FDSVGFLIATIIAILILSPLL.

It belongs to the CDP-archaeol synthase family. Mg(2+) is required as a cofactor.

The protein resides in the cell membrane. It catalyses the reaction 2,3-bis-O-(geranylgeranyl)-sn-glycerol 1-phosphate + CTP + H(+) = CDP-2,3-bis-O-(geranylgeranyl)-sn-glycerol + diphosphate. It participates in membrane lipid metabolism; glycerophospholipid metabolism. Functionally, catalyzes the formation of CDP-2,3-bis-(O-geranylgeranyl)-sn-glycerol (CDP-archaeol) from 2,3-bis-(O-geranylgeranyl)-sn-glycerol 1-phosphate (DGGGP) and CTP. This reaction is the third ether-bond-formation step in the biosynthesis of archaeal membrane lipids. The polypeptide is CDP-archaeol synthase (Methanocorpusculum labreanum (strain ATCC 43576 / DSM 4855 / Z)).